A 73-amino-acid polypeptide reads, in one-letter code: Antimicrobial peptide TsAP-1 (73 aa).

The first 22 residues, 1 to 22 (MQIKHLITLFFLVLIVADQCSA), serve as a signal peptide directing secretion. Lys-39 carries the post-translational modification Lysine amide. Residues 45-73 (EISAQIEQYKDLQKREAELEELLDRLPMY) constitute a propeptide that is removed on maturation.

In terms of tissue distribution, expressed by the venom gland.

The protein localises to the secreted. Has a low antimicrobial activity against S.aureus, E.coli, and C.albicans (MICs 120-160 uM). Has a low hemolytic activity (4% at 160 uM). Also inhibits the growth of two cancer cell lines on a total of five (the squamous carcinoma cell line H157 (IC(50)=55.9 uM) and the lung adenocarcinoma cell line H838 (IC(50)=52.5 uM)). The chain is Antimicrobial peptide TsAP-1 from Tityus serrulatus (Brazilian scorpion).